An 81-amino-acid polypeptide reads, in one-letter code: Three-finger toxin A1 (81 aa).

An N-terminal signal peptide occupies residues 1–21; sequence MKTLLLTLVVVTIVCLDFGHT. Disulfide bonds link Cys24/Cys43, Cys38/Cys60, Cys62/Cys73, and Cys74/Cys79.

It belongs to the three-finger toxin family. Short-chain subfamily. Type I alpha-neurotoxin sub-subfamily. Expressed by the venom gland.

Its subcellular location is the secreted. Functionally, binds and inhibits fetal (alpha-1-beta-1-gamma-delta/CHRNA1-CHRNB1-CHRNG-CHRND, IC(50)=1.4 nM), adult (alpha-1-beta-1-delta-epsilon/CHRNA1-CHRNB1-CHRND-CHRNE, IC(50)=12 nM) and neuronal alpha-7/CHRNA7 (IC(50)=400 nM) nicotinic acetylcholine receptors (nAChR) thereby impairing neuromuscular and neuronal transmissions. In Micrurus laticollaris (Balsas coral snake), this protein is Three-finger toxin A1.